The following is a 307-amino-acid chain: NAD kinase (307 aa).

The Proton acceptor role is filled by Asp-85. Residues 85 to 86 (DG), Arg-90, 159 to 160 (NE), Asp-189, and 200 to 205 (TAYAFS) contribute to the NAD(+) site.

Belongs to the NAD kinase family. A divalent metal cation serves as cofactor.

The protein resides in the cytoplasm. It carries out the reaction NAD(+) + ATP = ADP + NADP(+) + H(+). Its function is as follows. Involved in the regulation of the intracellular balance of NAD and NADP, and is a key enzyme in the biosynthesis of NADP. Catalyzes specifically the phosphorylation on 2'-hydroxyl of the adenosine moiety of NAD to yield NADP. The sequence is that of NAD kinase from Mycobacterium bovis (strain ATCC BAA-935 / AF2122/97).